The chain runs to 485 residues: MSELSQLSPQPLWDIFAKICSIPHPSYHEEQLAEYIVGWAKEKGFHVERDQVGNILIRKPATAGMENRKPVVLQAHLDMVPQKNNDTVHDFTKDPIQPYIDGEWVKARGTTLGADNGIGMASALAVLADENVVHGPLEVLLTMTEEAGMDGAFGLQGNWLQADILINTDSEEEGEIYMGCAGGIDFTSNLHLDREAVPAGFETFKLTLKGLKGGHSGGEIHVGLGNANKLLVRFLAGHAEELDLRLIDFNGGTLRNAIPREAFATIAVAADKVDVLKSLVNTYQEILKNELAEKEKNLALLLDSVANDKAALIAKSRDTFIRLLNATPNGVIRNSDVAKGVVETSLNVGVVTMTDNNVEIHCLIRSLIDSGKDYVVSMLDSLGKLAGAKTEAKGAYPGWQPDANSPVMHLVRETYQRLFNKTPNIQIIHAGLECGLFKKPYPEMDMVSIGPTITGPHSPDEQVHIESVGHYWTLLTELLKEIPAK.

His76 serves as a coordination point for Zn(2+). Residue Asp78 is part of the active site. Asp115 is a Zn(2+) binding site. Glu145 (proton acceptor) is an active-site residue. Positions 146 and 169 each coordinate Zn(2+). N6-acetyllysine is present on Lys296. Residue His457 coordinates Zn(2+).

This sequence belongs to the peptidase M20C family. Requires Zn(2+) as cofactor. Co(2+) is required as a cofactor.

It catalyses the reaction Hydrolysis of dipeptides, preferentially hydrophobic dipeptides including prolyl amino acids.. Inhibited by metal chelators. Dipeptidase with broad substrate specificity. Requires dipeptide substrates with an unblocked N-terminus and the amino group in the alpha or beta position. Non-protein amino acids and proline are not accepted in the C-terminal position, whereas some dipeptide amides and formyl amino acids are hydrolyzed. Also shows cysteinylglycinase activity, which is sufficient for E.coli to utilize cysteinylglycine as a cysteine source. This is Cytosol non-specific dipeptidase (pepD) from Escherichia coli (strain K12).